Consider the following 209-residue polypeptide: Ribosomal RNA large subunit methyltransferase E (209 aa).

Residues Gly-63, Trp-65, Asp-83, Asp-99, and Asp-124 each coordinate S-adenosyl-L-methionine. Lys-164 functions as the Proton acceptor in the catalytic mechanism.

This sequence belongs to the class I-like SAM-binding methyltransferase superfamily. RNA methyltransferase RlmE family.

The protein resides in the cytoplasm. It carries out the reaction uridine(2552) in 23S rRNA + S-adenosyl-L-methionine = 2'-O-methyluridine(2552) in 23S rRNA + S-adenosyl-L-homocysteine + H(+). In terms of biological role, specifically methylates the uridine in position 2552 of 23S rRNA at the 2'-O position of the ribose in the fully assembled 50S ribosomal subunit. The polypeptide is Ribosomal RNA large subunit methyltransferase E (Pseudoalteromonas atlantica (strain T6c / ATCC BAA-1087)).